The primary structure comprises 478 residues: Proline--tRNA ligase (478 aa).

The protein belongs to the class-II aminoacyl-tRNA synthetase family. ProS type 3 subfamily. In terms of assembly, homodimer.

The protein localises to the cytoplasm. It catalyses the reaction tRNA(Pro) + L-proline + ATP = L-prolyl-tRNA(Pro) + AMP + diphosphate. In terms of biological role, catalyzes the attachment of proline to tRNA(Pro) in a two-step reaction: proline is first activated by ATP to form Pro-AMP and then transferred to the acceptor end of tRNA(Pro). This is Proline--tRNA ligase from Ruminiclostridium cellulolyticum (strain ATCC 35319 / DSM 5812 / JCM 6584 / H10) (Clostridium cellulolyticum).